The primary structure comprises 530 residues: MEDDSLYLGGEWQFNHFSKLTSPRPDAAFAEIQRTSLPEKSPLSSETRVDLCDDLAPVARQLAPREKLPLSSRRPAAVGAGLQNMGNTCYLNASLQCLTYTPPLANYMLSREHSQTCQRPKCCMLCTMQAHITWALHSPGHVIQPSQALAAGFHRGKQEDAHEFLMFTVDAMKKACLPGHKQVDHHSKDTTLIHQIFGGCWRSQIKCLHCHGISDTFDPYLDIALDIQAAQSVKQALEQLVKPEELNGENAYPCGLCLQRAPASNTLTLHTSAKVLILVLKRFCDVTGNKLAKNVQYPECLDMQPYMSQQNTGPLVYVLYAVLVHAGWSCHNGYYFSYVKAQEGQWYKMDDAEVTACSITSVLSQQAYVLFYIQKSEWERHSESVSRGREPRALGAEDTDRPATQGELKRDHPCLQVPELDEHLVERATEESTLDHWKFPQEQNKMKPEFNVRKVEGTLPPNVLVIHQSKYKCGMKNHHPEQQSSLLNLSSMNSTDQESMNTGTLASLQGRTRRSKGKNKHSKRSLLVCQ.

The USP domain occupies 80-375; it reads AGLQNMGNTC…QAYVLFYIQK (296 aa). A compositionally biased stretch (basic and acidic residues) spans 382-392; sequence SESVSRGREPR. Disordered stretches follow at residues 382 to 412 and 493 to 530; these read SESV…KRDH and NSTD…LVCQ. Residues 495–510 are compositionally biased toward polar residues; the sequence is TDQESMNTGTLASLQG. Residues 511–524 are compositionally biased toward basic residues; it reads RTRRSKGKNKHSKR.

It belongs to the peptidase C19 family. USP17 subfamily.

The protein localises to the nucleus. Its subcellular location is the endoplasmic reticulum. The sequence is that of Inactive ubiquitin carboxyl-terminal hydrolase 17-like protein 8 (USP17L8) from Homo sapiens (Human).